The sequence spans 403 residues: Chromatin structure-remodeling complex subunit rsc58 (403 aa).

The span at 376-389 (SLSMNGSLSPSSTN) shows a compositional bias: low complexity. Positions 376-403 (SLSMNGSLSPSSTNVPLQSYRRTTKSRR) are disordered. S384 is subject to Phosphoserine.

Component of the RSC complex composed of at least arp9, arp42, rsc1, rsc4, rsc7, rsc9, rsc58, sfh1, snf21, ssr1, ssr2, ssr3 and ssr4. The complex interacts with histone and histone variant components of centromeric chromatin.

It localises to the cytoplasm. It is found in the nucleus. In terms of biological role, component of the chromatin structure remodeling complex (RSC), which is involved in transcription regulation and nucleosome positioning. Controls particularly membrane and organelle development genes. The protein is Chromatin structure-remodeling complex subunit rsc58 (rsc58) of Schizosaccharomyces pombe (strain 972 / ATCC 24843) (Fission yeast).